A 986-amino-acid chain; its full sequence is Ephrin type-A receptor 4 (986 aa).

A signal peptide spans 1-19; the sequence is MAGVPVGALLPLLVGVCGA. Residues 20 to 547 lie on the Extracellular side of the membrane; sequence VTGSRVYPAN…PIIGDGTNPT (528 aa). One can recognise an Eph LBD domain in the interval 30 to 209; it reads EVTLLDSRSV…FYKKCPLTVR (180 aa). N-linked (GlcNAc...) asparagine glycans are attached at residues Asn235, Asn340, and Asn408. 2 Fibronectin type-III domains span residues 328–439 and 440–537; these read PPSA…TNQA and APSP…TVPS. A helical transmembrane segment spans residues 548-569; that stretch reads VLLVSVAGSVVLVVILIAAFVI. Residues 570–986 are Cytoplasmic-facing; the sequence is SRRRSKYSKA…QQMHGRMVPV (417 aa). Tyr596 and Tyr602 each carry phosphotyrosine; by autocatalysis. In terms of domain architecture, Protein kinase spans 621 to 882; it reads IKIEKVIGVG…QIVNMLDKLI (262 aa). Residues 627–635 and Lys653 each bind ATP; that span reads IGVGEFGEV. Catalysis depends on Asp746, which acts as the Proton acceptor. Tyr779 and Tyr928 each carry phosphotyrosine; by autocatalysis. The SAM domain maps to 911–975; it reads SAVVSVSDWL…LSSVQAMRSQ (65 aa). The PDZ-binding signature appears at 984–986; that stretch reads VPV.

It belongs to the protein kinase superfamily. Tyr protein kinase family. Ephrin receptor subfamily. Interacts with the src family kinase, p59-Fyn, through the major phosphorylation site at position Tyr-602. Interacts (via PDZ motif) with SIPA1L1 (via PDZ domain); controls neuronal morphology through regulation of the RAP1 (RAP1A or RAP1B) and RAP2 (RAP2A, RAP2B or RAP2C) GTPases. In terms of tissue distribution, expressed at high levels in brain, with expression also detected in the kidney, lung, muscle and thymus.

Its subcellular location is the cell membrane. The protein localises to the early endosome. It carries out the reaction L-tyrosyl-[protein] + ATP = O-phospho-L-tyrosyl-[protein] + ADP + H(+). Its function is as follows. Receptor tyrosine kinase which binds membrane-bound ephrin family ligands residing on adjacent cells, leading to contact-dependent bidirectional signaling into neighboring cells. The signaling pathway downstream of the receptor is referred to as forward signaling while the signaling pathway downstream of the ephrin ligand is referred to as reverse signaling. Highly promiscuous, it has the unique property among Eph receptors to bind and to be physiologically activated by both GPI-anchored ephrin-A and transmembrane ephrin-B ligands including EFNA1 and EFNB3. Upon activation by ephrin ligands, modulates cell morphology and integrin-dependent cell adhesion through regulation of the Rac, Rap and Rho GTPases activity. Plays an important role in the development of the nervous system controlling different steps of axonal guidance including the establishment of the corticospinal projections. This chain is Ephrin type-A receptor 4 (EPHA4), found in Gallus gallus (Chicken).